We begin with the raw amino-acid sequence, 455 residues long: Rhodopsin (455 aa).

At 1-34 (MVESTTLVNQTWWYNPTVDIHPHWAKFDPIPDAV) the chain is on the extracellular side. N-linked (GlcNAc...) asparagine glycosylation is present at Asn9. The helical transmembrane segment at 35–59 (YYSVGIFIGVVGIIGILGNGVVIYL) threads the bilayer. Residues 60 to 71 (FSKTKSLQTPAN) are Cytoplasmic-facing. Residues 72-98 (MFIINLAMSDLSFSAINGFPLKTISAF) traverse the membrane as a helical segment. Residues 99–110 (MKKWIFGKVACQ) lie on the Extracellular side of the membrane. The cysteines at positions 109 and 187 are disulfide-linked. The helical transmembrane segment at 111-132 (LYGLLGGIFGFMSINTMAMISI) threads the bilayer. The 'Ionic lock' involved in activated form stabilization signature appears at 133–135 (DRY). At 133–152 (DRYNVIGRPMAASKKMSHRR) the chain is on the cytoplasmic side. The chain crosses the membrane as a helical span at residues 153 to 173 (AFLMIIFVWMWSIVWSVGPVF). The Extracellular segment spans residues 174–200 (NWGAYVPEGILTSCSFDYLSTDPSTRS). Residues 201–225 (FILCMYFCGFMLPIIIIAFCYFNIV) traverse the membrane as a helical segment. Over 226–262 (MSVSNHEKEMAAMAKRLNAKELRKAQAGASAEMKLAK) the chain is Cytoplasmic. The chain crosses the membrane as a helical span at residues 263–284 (ISMVIITQFMLSWSPYAIIALL). Residues 285–294 (AQFGPAEWVT) lie on the Extracellular side of the membrane. Residues 295–316 (PYAAELPVLFAKASAIHNPIVY) traverse the membrane as a helical segment. Lys306 carries the post-translational modification N6-(retinylidene)lysine. At 317–455 (SVSHPKFREA…QGVDNQAYQA (139 aa)) the chain is on the cytoplasmic side. Residues Cys337 and Cys338 are each lipidated (S-palmitoyl cysteine). Over residues 378 to 387 (QKMQAQQAAY) the composition is skewed to low complexity. Positions 378 to 455 (QKMQAQQAAY…QGVDNQAYQA (78 aa)) are disordered. Residues 388–433 (QPPPPPQGYPPQGYPPQGAYPPPQGYPPQGYPPQGYPPQGYPPQGA) are compositionally biased toward pro residues. 6 tandem repeats follow at residues 395–399 (GYPPQ), 400–404 (GYPPQ), 412–416 (GYPPQ), 417–421 (GYPPQ), 422–426 (GYPPQ), and 427–431 (GYPPQ). Positions 395–431 (GYPPQGYPPQGAYPPPQGYPPQGYPPQGYPPQGYPPQ) are 6 X 5 AA repeats of G-Y-P-P-Q.

It belongs to the G-protein coupled receptor 1 family. Opsin subfamily. Post-translationally, contains one covalently linked retinal chromophore. Upon light absorption, the covalently bound 11-cis-retinal is converted to all-trans-retinal. After hydrolysis of the Schiff base and release of the covalently bound all-trans-retinal, active rhodopsin is regenerated by binding of a fresh molecule of 11-cis-retinal.

The protein localises to the cell projection. It localises to the rhabdomere membrane. In terms of biological role, photoreceptor required for image-forming vision at low light intensity. Light-induced isomerization of 11-cis to all-trans retinal triggers a conformational change that activates signaling via G-proteins. Signaling mediates the activation of phospholipase C. Subsequent receptor phosphorylation mediates displacement of the bound G-protein alpha subunit by arrestin and terminates signaling. This is Rhodopsin (RHO) from Enteroctopus dofleini (North Pacific giant octopus).